A 284-amino-acid chain; its full sequence is Bifunctional protein FolD (284 aa).

NADP(+)-binding positions include 165-167 (GRS), Ser-190, and Ile-231.

It belongs to the tetrahydrofolate dehydrogenase/cyclohydrolase family. In terms of assembly, homodimer.

It carries out the reaction (6R)-5,10-methylene-5,6,7,8-tetrahydrofolate + NADP(+) = (6R)-5,10-methenyltetrahydrofolate + NADPH. It catalyses the reaction (6R)-5,10-methenyltetrahydrofolate + H2O = (6R)-10-formyltetrahydrofolate + H(+). Its pathway is one-carbon metabolism; tetrahydrofolate interconversion. Its function is as follows. Catalyzes the oxidation of 5,10-methylenetetrahydrofolate to 5,10-methenyltetrahydrofolate and then the hydrolysis of 5,10-methenyltetrahydrofolate to 10-formyltetrahydrofolate. This chain is Bifunctional protein FolD, found in Streptococcus thermophilus (strain ATCC BAA-250 / LMG 18311).